The primary structure comprises 247 residues: ATP synthase subunit a, chloroplastic (247 aa).

5 helical membrane passes run 38 to 58 (QVLI…TLAV), 95 to 115 (VPFI…GALL), 134 to 154 (INTT…AGIS), 199 to 219 (LVVV…VMFL), and 220 to 240 (GLFT…AYIG).

This sequence belongs to the ATPase A chain family. F-type ATPases have 2 components, CF(1) - the catalytic core - and CF(0) - the membrane proton channel. CF(1) has five subunits: alpha(3), beta(3), gamma(1), delta(1), epsilon(1). CF(0) has four main subunits: a, b, b' and c.

Its subcellular location is the plastid. The protein localises to the chloroplast thylakoid membrane. In terms of biological role, key component of the proton channel; it plays a direct role in the translocation of protons across the membrane. The chain is ATP synthase subunit a, chloroplastic from Daucus carota (Wild carrot).